A 376-amino-acid polypeptide reads, in one-letter code: Heme chaperone HemW (376 aa).

The Radical SAM core domain maps to 1–236 (MFKLPPISLY…LKQSGYKKYE (236 aa)). Tyr-10 is a binding site for S-adenosyl-L-methionine. [4Fe-4S] cluster-binding residues include Cys-16, Cys-20, and Cys-23. Residues Gly-66, 67–68 (GT), Glu-99, Gln-126, Arg-138, and Asp-162 each bind S-adenosyl-L-methionine.

The protein belongs to the anaerobic coproporphyrinogen-III oxidase family. HemW subfamily. It depends on [4Fe-4S] cluster as a cofactor.

It localises to the cytoplasm. In terms of biological role, probably acts as a heme chaperone, transferring heme to an unknown acceptor. Binds one molecule of heme per monomer, possibly covalently. Binds 1 [4Fe-4S] cluster. The cluster is coordinated with 3 cysteines and an exchangeable S-adenosyl-L-methionine. This is Heme chaperone HemW from Buchnera aphidicola subsp. Schizaphis graminum (strain Sg).